The sequence spans 279 residues: Shikimate dehydrogenase (NADP(+)) (279 aa).

Residues 17–19 and Thr64 contribute to the shikimate site; that span reads SQS. Lys68 serves as the catalytic Proton acceptor. Asn89 and Asp105 together coordinate shikimate. Residues 130–134 and Leu218 contribute to the NADP(+) site; that span reads GAGGA. Tyr220 is a shikimate binding site. Gly242 is a binding site for NADP(+).

This sequence belongs to the shikimate dehydrogenase family. In terms of assembly, homodimer.

The catalysed reaction is shikimate + NADP(+) = 3-dehydroshikimate + NADPH + H(+). It participates in metabolic intermediate biosynthesis; chorismate biosynthesis; chorismate from D-erythrose 4-phosphate and phosphoenolpyruvate: step 4/7. In terms of biological role, involved in the biosynthesis of the chorismate, which leads to the biosynthesis of aromatic amino acids. Catalyzes the reversible NADPH linked reduction of 3-dehydroshikimate (DHSA) to yield shikimate (SA). The polypeptide is Shikimate dehydrogenase (NADP(+)) (Methylococcus capsulatus (strain ATCC 33009 / NCIMB 11132 / Bath)).